Reading from the N-terminus, the 513-residue chain is tRNA-2-methylthio-N(6)-dimethylallyladenosine synthase (513 aa).

The MTTase N-terminal domain maps to 67-185 (KTFLIKTYGC…LPEILEEAYL (119 aa)). The [4Fe-4S] cluster site is built by Cys-76, Cys-112, Cys-146, Cys-222, Cys-226, and Cys-229. In terms of domain architecture, Radical SAM core spans 208–438 (REGNIKAWVN…NKKVACYSER (231 aa)). One can recognise a TRAM domain in the interval 441–504 (QQYEGQTVQV…QFSLNGTFIS (64 aa)).

Belongs to the methylthiotransferase family. MiaB subfamily. As to quaternary structure, monomer. It depends on [4Fe-4S] cluster as a cofactor.

It is found in the cytoplasm. It carries out the reaction N(6)-dimethylallyladenosine(37) in tRNA + (sulfur carrier)-SH + AH2 + 2 S-adenosyl-L-methionine = 2-methylsulfanyl-N(6)-dimethylallyladenosine(37) in tRNA + (sulfur carrier)-H + 5'-deoxyadenosine + L-methionine + A + S-adenosyl-L-homocysteine + 2 H(+). Its function is as follows. Catalyzes the methylthiolation of N6-(dimethylallyl)adenosine (i(6)A), leading to the formation of 2-methylthio-N6-(dimethylallyl)adenosine (ms(2)i(6)A) at position 37 in tRNAs that read codons beginning with uridine. This Staphylococcus saprophyticus subsp. saprophyticus (strain ATCC 15305 / DSM 20229 / NCIMB 8711 / NCTC 7292 / S-41) protein is tRNA-2-methylthio-N(6)-dimethylallyladenosine synthase.